Consider the following 101-residue polypeptide: Threonine-rich inner membrane protein GfcA (101 aa).

An N-terminal signal peptide occupies residues 1–21 (MKHKLSAILMAFMLTTPAAFA). Over 22 to 59 (APEATNGTEATTGTTGTTTTTTGATTTATTTGGVAAGA) the chain is Cytoplasmic. The tract at residues 24–45 (EATNGTEATTGTTGTTTTTTGA) is disordered. The chain crosses the membrane as a helical span at residues 60-80 (VGTATVVGVATAVGVATLAVV). Topologically, residues 81–101 (AANDSGDGGSHNTSTTTSTTR) are periplasmic. The segment at 82–101 (ANDSGDGGSHNTSTTTSTTR) is disordered.

It is found in the cell inner membrane. The sequence is that of Threonine-rich inner membrane protein GfcA (gfcA) from Escherichia coli (strain K12).